The sequence spans 36 residues: Photosystem II reaction center protein M (36 aa).

A helical transmembrane segment spans residues 5 to 25 (ILGVIATALFIIIPTSFLLIL).

Belongs to the PsbM family. As to quaternary structure, PSII is composed of 1 copy each of membrane proteins PsbA, PsbB, PsbC, PsbD, PsbE, PsbF, PsbH, PsbI, PsbJ, PsbK, PsbL, PsbM, PsbT, PsbX, PsbY, PsbZ, Psb30/Ycf12, at least 3 peripheral proteins of the oxygen-evolving complex and a large number of cofactors. It forms dimeric complexes.

The protein resides in the plastid. It localises to the chloroplast thylakoid membrane. In terms of biological role, one of the components of the core complex of photosystem II (PSII). PSII is a light-driven water:plastoquinone oxidoreductase that uses light energy to abstract electrons from H(2)O, generating O(2) and a proton gradient subsequently used for ATP formation. It consists of a core antenna complex that captures photons, and an electron transfer chain that converts photonic excitation into a charge separation. This subunit is found at the monomer-monomer interface. The polypeptide is Photosystem II reaction center protein M (Chlorella vulgaris (Green alga)).